The following is a 372-amino-acid chain: Cytochrome b (372 aa).

4 consecutive transmembrane segments (helical) span residues 29-49, 73-95, 108-128, and 174-194; these read FGSM…ILSW, WFIR…LHIL, VWYS…LGYV, and FFSF…IHLI. Residues histidine 79 and histidine 93 each contribute to the heme b site. Residues histidine 178 and histidine 192 each coordinate heme b. Histidine 197 contacts a ubiquinone. The next 4 membrane-spanning stretches (helical) occupy residues 220–240, 284–301, 311–336, and 344–363; these read FSLK…FCIF, LGGV…VFLG, MVKT…IMGG, and DILG…IMLL.

It belongs to the cytochrome b family. As to quaternary structure, the main subunits of complex b-c1 are: cytochrome b, cytochrome c1 and the Rieske protein. Requires heme b as cofactor.

It is found in the mitochondrion inner membrane. Its function is as follows. Component of the ubiquinol-cytochrome c reductase complex (complex III or cytochrome b-c1 complex) that is part of the mitochondrial respiratory chain. The b-c1 complex mediates electron transfer from ubiquinol to cytochrome c. Contributes to the generation of a proton gradient across the mitochondrial membrane that is then used for ATP synthesis. In Leptorhynchoides thecatus (Thorny-headed worm), this protein is Cytochrome b (mt:Cyt-b).